A 492-amino-acid polypeptide reads, in one-letter code: Catalase isozyme 2 (492 aa).

Active-site residues include histidine 65 and asparagine 138. Tyrosine 348 is a binding site for heme.

The protein belongs to the catalase family. In terms of assembly, homotetramer. It depends on heme as a cofactor.

The protein resides in the peroxisome. The catalysed reaction is 2 H2O2 = O2 + 2 H2O. In terms of biological role, occurs in almost all aerobically respiring organisms and serves to protect cells from the toxic effects of hydrogen peroxide. The protein is Catalase isozyme 2 (CAT2) of Solanum lycopersicum (Tomato).